A 342-amino-acid polypeptide reads, in one-letter code: Heat-inducible transcription repressor HrcA (342 aa).

The protein belongs to the HrcA family.

Functionally, negative regulator of class I heat shock genes (grpE-dnaK-dnaJ and groELS operons). Prevents heat-shock induction of these operons. This is Heat-inducible transcription repressor HrcA from Dechloromonas aromatica (strain RCB).